The sequence spans 429 residues: Ribosomal RNA small subunit methyltransferase B (429 aa).

S-adenosyl-L-methionine is bound by residues 254–260 (CAAPGGK), Asp-277, Asp-303, and Asp-322. The active-site Nucleophile is Cys-375. Positions 397–419 (ALSETGTPDQPGQQNLPGGEEGD) are disordered. Polar residues predominate over residues 400 to 412 (ETGTPDQPGQQNL).

This sequence belongs to the class I-like SAM-binding methyltransferase superfamily. RsmB/NOP family.

The protein localises to the cytoplasm. It catalyses the reaction cytidine(967) in 16S rRNA + S-adenosyl-L-methionine = 5-methylcytidine(967) in 16S rRNA + S-adenosyl-L-homocysteine + H(+). In terms of biological role, specifically methylates the cytosine at position 967 (m5C967) of 16S rRNA. This Salmonella enteritidis PT4 (strain P125109) protein is Ribosomal RNA small subunit methyltransferase B.